A 170-amino-acid chain; its full sequence is Acireductone dioxygenase (170 aa).

4 residues coordinate Fe(2+): histidine 99, histidine 101, glutamate 105, and histidine 144. Ni(2+) is bound by residues histidine 99, histidine 101, glutamate 105, and histidine 144.

This sequence belongs to the acireductone dioxygenase (ARD) family. As to quaternary structure, monomer. Fe(2+) is required as a cofactor. It depends on Ni(2+) as a cofactor.

It catalyses the reaction 1,2-dihydroxy-5-(methylsulfanyl)pent-1-en-3-one + O2 = 3-(methylsulfanyl)propanoate + CO + formate + 2 H(+). The catalysed reaction is 1,2-dihydroxy-5-(methylsulfanyl)pent-1-en-3-one + O2 = 4-methylsulfanyl-2-oxobutanoate + formate + 2 H(+). Its pathway is amino-acid biosynthesis; L-methionine biosynthesis via salvage pathway; L-methionine from S-methyl-5-thio-alpha-D-ribose 1-phosphate: step 5/6. Functionally, catalyzes 2 different reactions between oxygen and the acireductone 1,2-dihydroxy-3-keto-5-methylthiopentene (DHK-MTPene) depending upon the metal bound in the active site. Fe-containing acireductone dioxygenase (Fe-ARD) produces formate and 2-keto-4-methylthiobutyrate (KMTB), the alpha-ketoacid precursor of methionine in the methionine recycle pathway. Ni-containing acireductone dioxygenase (Ni-ARD) produces methylthiopropionate, carbon monoxide and formate, and does not lie on the methionine recycle pathway. This Bacillus cytotoxicus (strain DSM 22905 / CIP 110041 / 391-98 / NVH 391-98) protein is Acireductone dioxygenase.